We begin with the raw amino-acid sequence, 293 residues long: Ribosomal protein L11 methyltransferase (293 aa).

4 residues coordinate S-adenosyl-L-methionine: threonine 145, glycine 166, aspartate 188, and asparagine 230.

It belongs to the methyltransferase superfamily. PrmA family.

It localises to the cytoplasm. It carries out the reaction L-lysyl-[protein] + 3 S-adenosyl-L-methionine = N(6),N(6),N(6)-trimethyl-L-lysyl-[protein] + 3 S-adenosyl-L-homocysteine + 3 H(+). Functionally, methylates ribosomal protein L11. The sequence is that of Ribosomal protein L11 methyltransferase from Haemophilus ducreyi (strain 35000HP / ATCC 700724).